The primary structure comprises 99 residues: MVEPKIRPLGERVLVKLIEEQEVRKGGIIIPDTAKEKPQEATVIAVGPGKLDENGKRIPIEVKKGDKVLISKYGGTEVKIDGESFQILREDDILAIIEG.

Belongs to the GroES chaperonin family. In terms of assembly, heptamer of 7 subunits arranged in a ring. Interacts with the chaperonin GroEL.

It is found in the cytoplasm. In terms of biological role, together with the chaperonin GroEL, plays an essential role in assisting protein folding. The GroEL-GroES system forms a nano-cage that allows encapsulation of the non-native substrate proteins and provides a physical environment optimized to promote and accelerate protein folding. GroES binds to the apical surface of the GroEL ring, thereby capping the opening of the GroEL channel. This is Co-chaperonin GroES from Methylacidiphilum infernorum (isolate V4) (Methylokorus infernorum (strain V4)).